Reading from the N-terminus, the 399-residue chain is Guanine nucleotide-binding protein G(f) subunit alpha (399 aa).

The 354-residue stretch at 46 to 399 (TTVKILLLGT…SENVSSMGLF (354 aa)) folds into the G-alpha domain. The segment at 49–62 (KILLLGTAESGKTT) is G1 motif. GTP contacts are provided by residues 54-61 (GTAESGKT), 188-194 (LHSRKIT), 221-225 (DVGGQ), 290-293 (NKYD), and alanine 371. Residues 186–194 (DILHSRKIT) form a G2 motif region. A Mg(2+)-binding site is contributed by threonine 194. A G3 motif region spans residues 217 to 226 (FQMYDVGGQR). Residues 286 to 293 (IVFLNKYD) form a G4 motif region. Positions 369 to 374 (TVATDT) are G5 motif.

This sequence belongs to the G-alpha family. In terms of assembly, g proteins are composed of 3 units; alpha, beta and gamma. The alpha chain contains the guanine nucleotide binding site. In terms of tissue distribution, during embryogenesis, expressed primarily in the developing gut and transiently in the amnioserosa.

Functionally, guanine nucleotide-binding proteins (G proteins) are involved as modulators or transducers in various transmembrane signaling systems. The sequence is that of Guanine nucleotide-binding protein G(f) subunit alpha (Galphaf) from Drosophila melanogaster (Fruit fly).